The primary structure comprises 259 residues: Glutamate 5-kinase (259 aa).

Lys-18 is an ATP binding site. Substrate is bound by residues Ser-54, Asp-141, and Asn-153. Residue 173–174 (SD) coordinates ATP.

Belongs to the glutamate 5-kinase family.

It is found in the cytoplasm. It carries out the reaction L-glutamate + ATP = L-glutamyl 5-phosphate + ADP. The protein operates within amino-acid biosynthesis; L-proline biosynthesis; L-glutamate 5-semialdehyde from L-glutamate: step 1/2. In terms of biological role, catalyzes the transfer of a phosphate group to glutamate to form L-glutamate 5-phosphate. The polypeptide is Glutamate 5-kinase (Clavibacter sepedonicus (Clavibacter michiganensis subsp. sepedonicus)).